Consider the following 154-residue polypeptide: SsrA-binding protein (154 aa).

This sequence belongs to the SmpB family.

It is found in the cytoplasm. Functionally, required for rescue of stalled ribosomes mediated by trans-translation. Binds to transfer-messenger RNA (tmRNA), required for stable association of tmRNA with ribosomes. tmRNA and SmpB together mimic tRNA shape, replacing the anticodon stem-loop with SmpB. tmRNA is encoded by the ssrA gene; the 2 termini fold to resemble tRNA(Ala) and it encodes a 'tag peptide', a short internal open reading frame. During trans-translation Ala-aminoacylated tmRNA acts like a tRNA, entering the A-site of stalled ribosomes, displacing the stalled mRNA. The ribosome then switches to translate the ORF on the tmRNA; the nascent peptide is terminated with the 'tag peptide' encoded by the tmRNA and targeted for degradation. The ribosome is freed to recommence translation, which seems to be the essential function of trans-translation. The chain is SsrA-binding protein from Lachnoclostridium phytofermentans (strain ATCC 700394 / DSM 18823 / ISDg) (Clostridium phytofermentans).